The chain runs to 160 residues: Nascent polypeptide-associated complex subunit alpha (160 aa).

The NAC-A/B domain maps to 10 to 75 (TKGEKKTREA…HSFDDIASRL (66 aa)). Positions 120–159 (VNPKDVEVVMKETKASREKVVETLIATKNDLVSAVLELTT) constitute a UBA domain.

This sequence belongs to the NAC-alpha family. As to quaternary structure, part of the nascent polypeptide-associated complex (NAC), consisting of nacA and nacB.

The protein resides in the cytoplasm. The protein localises to the nucleus. Its function is as follows. Component of the nascent polypeptide-associated complex (NAC), a dynamic component of the ribosomal exit tunnel, protecting the emerging polypeptides from interaction with other cytoplasmic proteins to ensure appropriate nascent protein targeting. The NAC complex also promotes mitochondrial protein import by enhancing productive ribosome interactions with the outer mitochondrial membrane and blocks the inappropriate interaction of ribosomes translating non-secretory nascent polypeptides with translocation sites in the membrane of the endoplasmic reticulum. May also be involved in transcription regulation. The polypeptide is Nascent polypeptide-associated complex subunit alpha (nacA) (Dictyostelium discoideum (Social amoeba)).